A 73-amino-acid chain; its full sequence is MSKKKDVIEMEGTITEPLPNAMFRVKLENGHEVLAHISGRMRMNYIRILKGDRVLVELSPYDLTRGRITYRYK.

The S1-like domain maps to 1–73; sequence MSKKKDVIEM…TRGRITYRYK (73 aa).

The protein belongs to the IF-1 family. In terms of assembly, component of the 30S ribosomal translation pre-initiation complex which assembles on the 30S ribosome in the order IF-2 and IF-3, IF-1 and N-formylmethionyl-tRNA(fMet); mRNA recruitment can occur at any time during PIC assembly.

It localises to the cytoplasm. Its function is as follows. One of the essential components for the initiation of protein synthesis. Stabilizes the binding of IF-2 and IF-3 on the 30S subunit to which N-formylmethionyl-tRNA(fMet) subsequently binds. Helps modulate mRNA selection, yielding the 30S pre-initiation complex (PIC). Upon addition of the 50S ribosomal subunit IF-1, IF-2 and IF-3 are released leaving the mature 70S translation initiation complex. This Roseiflexus castenholzii (strain DSM 13941 / HLO8) protein is Translation initiation factor IF-1.